Here is a 682-residue protein sequence, read N- to C-terminus: 1,4-alpha-glucan-branching enzyme (682 aa).

(1,4-alpha-D-glucosyl)n is bound by residues tryptophan 88 and lysine 124. The Nucleophile role is filled by aspartate 342. Glutamate 397 serves as the catalytic Proton donor.

Belongs to the glycosyl hydrolase 13 family. GlgB subfamily.

The protein resides in the cytoplasm. It carries out the reaction Transfers a segment of a (1-&gt;4)-alpha-D-glucan chain to a primary hydroxy group in a similar glucan chain.. It functions in the pathway glycan biosynthesis; glycogen biosynthesis. In terms of biological role, glycogen-branching enzyme participates in the glycogen biosynthetic process along with glycogenin and glycogen synthase. Generates alpha-1,6-glucosidic branches from alpha-1,4-linked glucose chains, to increase solubility of the glycogen polymer. The protein is 1,4-alpha-glucan-branching enzyme (GLC3) of Cryptococcus neoformans var. neoformans serotype D (strain B-3501A) (Filobasidiella neoformans).